A 554-amino-acid chain; its full sequence is Glucose-6-phosphate isomerase (554 aa).

The Proton donor role is filled by E359. Residues H390 and K518 contribute to the active site.

It belongs to the GPI family.

Its subcellular location is the cytoplasm. It carries out the reaction alpha-D-glucose 6-phosphate = beta-D-fructose 6-phosphate. It functions in the pathway carbohydrate biosynthesis; gluconeogenesis. Its pathway is carbohydrate degradation; glycolysis; D-glyceraldehyde 3-phosphate and glycerone phosphate from D-glucose: step 2/4. Its function is as follows. Catalyzes the reversible isomerization of glucose-6-phosphate to fructose-6-phosphate. In Ectopseudomonas mendocina (strain ymp) (Pseudomonas mendocina), this protein is Glucose-6-phosphate isomerase.